The following is a 35-amino-acid chain: Cytochrome b6-f complex subunit 5 (35 aa).

A helical membrane pass occupies residues 5-25; the sequence is LLTGIVLGSIFITLLGLLAAA.

Belongs to the PetG family. As to quaternary structure, the 4 large subunits of the cytochrome b6-f complex are cytochrome b6, subunit IV (17 kDa polypeptide, PetD), cytochrome f and the Rieske protein, while the 4 small subunits are PetG, PetL, PetM and PetN. The complex functions as a dimer.

Its subcellular location is the plastid. The protein localises to the chloroplast thylakoid membrane. In terms of biological role, component of the cytochrome b6-f complex, which mediates electron transfer between photosystem II (PSII) and photosystem I (PSI), cyclic electron flow around PSI, and state transitions. PetG is required for either the stability or assembly of the cytochrome b6-f complex. The sequence is that of Cytochrome b6-f complex subunit 5 from Cyanidium caldarium (Red alga).